Here is a 234-residue protein sequence, read N- to C-terminus: MGKTTKRMRMISNQIDRTKQYNIHEAIPLLKDHATVKFIESLDVAVKLGINARKSSQNIHSATILPHGIGRSIKVAVFAQGINVSIAETAGADLVGMDNLAAQITKGNINFDVVIASPDTMHLVSTLGQILGPKGMMPNTKTGTITQNIALAIKEIKSGQIRYHNDKNGIIHTTIGKINFESYQLIENLEALLRALKKDKPLQTKGIYFKKICLSTTMGPSLTIDQCSLSTLVK.

It belongs to the universal ribosomal protein uL1 family. As to quaternary structure, part of the 50S ribosomal subunit.

Functionally, binds directly to 23S rRNA. The L1 stalk is quite mobile in the ribosome, and is involved in E site tRNA release. Protein L1 is also a translational repressor protein, it controls the translation of the L11 operon by binding to its mRNA. The polypeptide is Large ribosomal subunit protein uL1 (Baumannia cicadellinicola subsp. Homalodisca coagulata).